The primary structure comprises 254 residues: Acidic endochitinase (254 aa).

Positions Met1–Ala23 are cleaved as a signal peptide. The active-site Proton donor is Glu91. The cysteines at positions 213 and 245 are disulfide-linked.

This sequence belongs to the glycosyl hydrolase 19 family. Chitinase class II subfamily.

It is found in the secreted. It catalyses the reaction Random endo-hydrolysis of N-acetyl-beta-D-glucosaminide (1-&gt;4)-beta-linkages in chitin and chitodextrins.. In terms of biological role, defense against chitin-containing fungal pathogens. This Petunia hybrida (Petunia) protein is Acidic endochitinase.